A 317-amino-acid chain; its full sequence is HTH-type transcriptional repressor PA14_22550 (317 aa).

In terms of domain architecture, HTH lysR-type spans 1–59 (MDKLTAMATFVKVVDAGSFTRAADALGLPKARVSQRVSDLEKHLGVRLLNRTTRALSLT). Residues 19–38 (FTRAADALGLPKARVSQRVS) constitute a DNA-binding region (H-T-H motif).

Belongs to the LysR transcriptional regulatory family.

Its function is as follows. Represses the transcription of the operon that consists of PA14_22510 to PA14_22540. The polypeptide is HTH-type transcriptional repressor PA14_22550 (Pseudomonas aeruginosa (strain UCBPP-PA14)).